Reading from the N-terminus, the 357-residue chain is Quinolinate synthase (357 aa).

Iminosuccinate is bound by residues His-50 and Ser-71. Cys-116 is a [4Fe-4S] cluster binding site. Iminosuccinate contacts are provided by residues 142–144 and Ser-159; that span reads YAN. Cys-203 is a [4Fe-4S] cluster binding site. Iminosuccinate-binding positions include 229–231 and Thr-246; that span reads HPE. Cys-300 contributes to the [4Fe-4S] cluster binding site.

This sequence belongs to the quinolinate synthase family. Type 1 subfamily. Requires [4Fe-4S] cluster as cofactor.

The protein localises to the cytoplasm. It catalyses the reaction iminosuccinate + dihydroxyacetone phosphate = quinolinate + phosphate + 2 H2O + H(+). The protein operates within cofactor biosynthesis; NAD(+) biosynthesis; quinolinate from iminoaspartate: step 1/1. Functionally, catalyzes the condensation of iminoaspartate with dihydroxyacetone phosphate to form quinolinate. This Shewanella sp. (strain MR-4) protein is Quinolinate synthase.